The primary structure comprises 1977 residues: MSESEGGKDTTPEPSPANGAGPGPEWGLCPGPPAVEGESSGASGLGTPKRRNQHSKHKTVAVASAQRSPRALFCLTLANPLRRSCISIVEWKPFDILILLTIFANCVALGVYIPFPEDDSNTANHNLEQVEYVFLVIFTVETVLKIVAYGLVLHPSAYIRNGWNLLDFIIVVVGLFSVLLEQGPGRPGDAPHTGGKPGGFDVKALRAFRVLRPLRLVSGVPSLHIVLNSIMKALVPLLHIALLVLFVIIIYAIIGLELFLGRMHKTCYFLGSDMEAEEDPSPCASSGSGRACTLNQTECRGRWPGPNGGITNFDNFFFAMLTVFQCVTMEGWTDVLYWMQDAMGYELPWVYFVSLVIFGSFFVLNLVLGVLSGEFSKEREKAKARGDFQKQREKQQMEEDLRGYLDWITQAEELDMEDPSADDNLGSMAEEGRAGHRPQLAELTNRRRGRLRWFSHSTRSTHSTSSHASLPASDTGSMTETQGDEDEEEGALASCTRCLNKIMKTRVCRRLRRANRVLRARCRRAVKSNACYWAVLLLVFLNTLTIASEHHGQPVWLTQIQEYANKVLLCLFTVEMLLKLYGLGPSAYVSSFFNRFDCFVVCGGILETTLVEVGAMQPLGISVLRCVRLLRIFKVTRHWASLSNLVASLLNSMKSIASLLLLLFLFIIIFSLLGMQLFGGKFNFDQTHTKRSTFDTFPQALLTVFQILTGEDWNVVMYDGIMAYGGPFFPGMLVCIYFIILFICGNYILLNVFLAIAVDNLASGDAGTAKDKGGEKSNEKDLPQENEGLVPGVEKEEEEGARREGADMEEEEEEEEEEEEEEEEEGAGGVELLQEVVPKEKVVPIPEGSAFFCLSQTNPLRKGCHTLIHHHVFTNLILVFIILSSVSLAAEDPIRAHSFRNHILGYFDYAFTSIFTVEILLKMTVFGAFLHRGSFCRSWFNMLDLLVVSVSLISFGIHSSAISVVKILRVLRVLRPLRAINRAKGLKHVVQCVFVAIRTIGNIMIVTTLLQFMFACIGVQLFKGKFYTCTDEAKHTPQECKGSFLVYPDGDVSRPLVRERLWVNSDFNFDNVLSAMMALFTVSTFEGWPALLYKAIDAYAEDHGPIYNYRVEISVFFIVYIIIIAFFMMNIFVGFVIITFRAQGEQEYQNCELDKNQRQCVEYALKAQPLRRYIPKNPHQYRVWATVNSAAFEYLMFLLILLNTVALAMQHYEQTAPFNYAMDILNMVFTGLFTIEMVLKIIAFKPKHYFTDAWNTFDALIVVGSIVDIAVTEVNNGGHLGESSEDSSRISITFFRLFRVMRLVKLLSKGEGIRTLLWTFIKSFQALPYVALLIAMIFFIYAVIGMQMFGKVALQDGTQINRNNNFQTFPQAVLLLFRCATGEAWQEIMLASLPGNRCDPESDFGPGEEFTCGSNFAIAYFISFFMLCAFLIINLFVAVIMDNFDYLTRDWSILGPHHLDEFKRIWSEYDPGAKGRIKHLDVVALLRRIQPPLGFGKLCPHRVACKRLVAMNMPLNSDGTVTFNATLFALVRTSLKIKTEGNLEQANQELRIVIKKIWKRMKQKLLDEVIPPPDEEEVTVGKFYATFLIQDYFRKFRRRKEKGLLGNDAAPSTSSALQAGLRSLQDLGPEMRQALTCDTEEEEEEGQEGVEEEDEKDLETNKATMVSQPSARRGSGISVSLPVGDRLPDSLSFGPSDDDRGTPTSSQPSVPQAGSNTHRRGSGALIFTIPEEGNSQPKGTKGQNKQDEDEEVPDRLSYLDEQAGTPPCSVLLPPHRAQRYMDGHLVPRRRLLPPTPAGRKPSFTIQCLQRQGSCEDLPIPGTYHRGRNSGPNRAQGSWATPPQRGRLLYAPLLLVEEGAAGEGYLGRSSGPLRTFTCLHVPGTHSDPSHGKRGSADSLVEAVLISEGLGLFARDPRFVALAKQEIADACRLTLDEMDNAASDLLAQGTSSLYSDEESILSRFDEEDLGDEMACVHAL.

Residues 1–11 (MSESEGGKDTT) show a composition bias toward basic and acidic residues. The segment at 1 to 60 (MSESEGGKDTTPEPSPANGAGPGPEWGLCPGPPAVEGESSGASGLGTPKRRNQHSKHKTV) is disordered. At 1–92 (MSESEGGKDT…RSCISIVEWK (92 aa)) the chain is on the cytoplasmic side. A compositionally biased stretch (basic residues) spans 48-59 (PKRRNQHSKHKT). The stretch at 79 to 375 (NPLRRSCISI…LVLGVLSGEF (297 aa)) is one I repeat. The helical transmembrane segment at 93 to 111 (PFDILILLTIFANCVALGV) threads the bilayer. Residues 112-129 (YIPFPEDDSNTANHNLEQ) lie on the Extracellular side of the membrane. A helical membrane pass occupies residues 130 to 149 (VEYVFLVIFTVETVLKIVAY). Topologically, residues 150–161 (GLVLHPSAYIRN) are cytoplasmic. The helical transmembrane segment at 162-180 (GWNLLDFIIVVVGLFSVLL) threads the bilayer. Residues 181-201 (EQGPGRPGDAPHTGGKPGGFD) lie on the Extracellular side of the membrane. Residues 202–220 (VKALRAFRVLRPLRLVSGV) traverse the membrane as a helical segment. At 221–239 (PSLHIVLNSIMKALVPLLH) the chain is on the cytoplasmic side. The helical transmembrane segment at 240 to 259 (IALLVLFVIIIYAIIGLELF) threads the bilayer. The Extracellular portion of the chain corresponds to 260 to 347 (LGRMHKTCYF…WMQDAMGYEL (88 aa)). N295 carries an N-linked (GlcNAc...) asparagine glycan. E330 provides a ligand contact to Ca(2+). Residues 348-372 (PWVYFVSLVIFGSFFVLNLVLGVLS) form a helical membrane-spanning segment. Residues 373–529 (GEFSKEREKA…ARCRRAVKSN (157 aa)) are Cytoplasmic-facing. The interval 395 to 412 (QQMEEDLRGYLDWITQAE) is binding to the beta subunit. Disordered regions lie at residues 418–441 (DPSADDNLGSMAEEGRAGHRPQLA) and 455–488 (SHSTRSTHSTSSHASLPASDTGSMTETQGDEDEE). A compositionally biased stretch (low complexity) spans 455-469 (SHSTRSTHSTSSHAS). One copy of the II repeat lies at 515–761 (NRVLRARCRR…VFLAIAVDNL (247 aa)). The chain crosses the membrane as a helical span at residues 530–549 (ACYWAVLLLVFLNTLTIASE). The Extracellular portion of the chain corresponds to 550–564 (HHGQPVWLTQIQEYA). A helical transmembrane segment spans residues 565 to 583 (NKVLLCLFTVEMLLKLYGL). The Cytoplasmic segment spans residues 584 to 591 (GPSAYVSS). The chain crosses the membrane as a helical span at residues 592-610 (FFNRFDCFVVCGGILETTL). Over 611–620 (VEVGAMQPLG) the chain is Extracellular. The chain crosses the membrane as a helical span at residues 621-639 (ISVLRCVRLLRIFKVTRHW). Residues 640–658 (ASLSNLVASLLNSMKSIAS) are Cytoplasmic-facing. A helical transmembrane segment spans residues 659–679 (LLLLLFLFIIIFSLLGMQLFG). The Extracellular segment spans residues 680 to 733 (GKFNFDQTHTKRSTFDTFPQALLTVFQILTGEDWNVVMYDGIMAYGGPFFPGML). E711 serves as a coordination point for Ca(2+). The chain crosses the membrane as a helical span at residues 734 to 758 (VCIYFIILFICGNYILLNVFLAIAV). The Cytoplasmic segment spans residues 759–871 (DNLASGDAGT…KGCHTLIHHH (113 aa)). The interval 767–830 (GTAKDKGGEK…EEEEEGAGGV (64 aa)) is disordered. The span at 768-783 (TAKDKGGEKSNEKDLP) shows a compositional bias: basic and acidic residues. Positions 807-826 (DMEEEEEEEEEEEEEEEEEG) are enriched in acidic residues. Residues 858–1140 (NPLRKGCHTL…IFVGFVIITF (283 aa)) form an III repeat. Residues 872–890 (VFTNLILVFIILSSVSLAA) form a helical membrane-spanning segment. The Extracellular segment spans residues 891–906 (EDPIRAHSFRNHILGY). A helical transmembrane segment spans residues 907–926 (FDYAFTSIFTVEILLKMTVF). The Cytoplasmic segment spans residues 927–938 (GAFLHRGSFCRS). The helical transmembrane segment at 939 to 957 (WFNMLDLLVVSVSLISFGI) threads the bilayer. Residues 958 to 963 (HSSAIS) lie on the Extracellular side of the membrane. Residues 964–983 (VVKILRVLRVLRPLRAINRA) form a helical membrane-spanning segment. Topologically, residues 984–1002 (KGLKHVVQCVFVAIRTIGN) are cytoplasmic. A helical transmembrane segment spans residues 1003 to 1022 (IMIVTTLLQFMFACIGVQLF). Residues 1023 to 1112 (KGKFYTCTDE…HGPIYNYRVE (90 aa)) lie on the Extracellular side of the membrane. A dihydropyridine binding region spans residues 1060–1150 (RLWVNSDFNF…RAQGEQEYQN (91 aa)). E1086 lines the Ca(2+) pocket. A helical transmembrane segment spans residues 1113 to 1133 (ISVFFIVYIIIIAFFMMNIFV). Topologically, residues 1134 to 1190 (GFVIITFRAQGEQEYQNCELDKNQRQCVEYALKAQPLRRYIPKNPHQYRVWATVNSA) are cytoplasmic. An IV repeat occupies 1177 to 1444 (NPHQYRVWAT…LFVAVIMDNF (268 aa)). A helical membrane pass occupies residues 1191–1209 (AFEYLMFLLILLNTVALAM). Over 1210–1224 (QHYEQTAPFNYAMDI) the chain is Extracellular. A helical membrane pass occupies residues 1225 to 1244 (LNMVFTGLFTIEMVLKIIAF). Over 1245-1251 (KPKHYFT) the chain is Cytoplasmic. A helical membrane pass occupies residues 1252–1273 (DAWNTFDALIVVGSIVDIAVTE). The Extracellular segment spans residues 1274–1290 (VNNGGHLGESSEDSSRI). The helical transmembrane segment at 1291-1310 (SITFFRLFRVMRLVKLLSKG) threads the bilayer. Residues 1311–1329 (EGIRTLLWTFIKSFQALPY) are Cytoplasmic-facing. A helical transmembrane segment spans residues 1330–1349 (VALLIAMIFFIYAVIGMQMF). The Extracellular portion of the chain corresponds to 1350-1416 (GKVALQDGTQ…GEEFTCGSNF (67 aa)). The dihydropyridine binding stretch occupies residues 1397–1463 (RCDPESDFGP…LGPHHLDEFK (67 aa)). Residues 1409-1452 (EFTCGSNFAIAYFISFFMLCAFLIINLFVAVIMDNFDYLTRDWS) form a phenylalkylamine binding region. A helical membrane pass occupies residues 1417 to 1441 (AIAYFISFFMLCAFLIINLFVAVIM). Topologically, residues 1442–1977 (DNFDYLTRDW…GDEMACVHAL (536 aa)) are cytoplasmic. 2 disordered regions span residues 1637-1754 (CDTE…EVPD) and 1816-1841 (DLPIPGTYHRGRNSGPNRAQGSWATP). Acidic residues predominate over residues 1638–1657 (DTEEEEEEGQEGVEEEDEKD). Polar residues-rich tracts occupy residues 1661 to 1670 (NKATMVSQPS), 1702 to 1716 (TPTSSQPSVPQAGSN), 1733 to 1743 (GNSQPKGTKGQ), and 1829 to 1840 (SGPNRAQGSWAT).

Belongs to the calcium channel alpha-1 subunit (TC 1.A.1.11) family. CACNA1F subfamily. As to quaternary structure, voltage-dependent calcium channels are multisubunit complexes, consisting of alpha-1, alpha-2, beta and delta subunits in a 1:1:1:1 ratio. The channel activity is directed by the pore-forming and voltage-sensitive alpha-1 subunit. In many cases, this subunit is sufficient to generate voltage-sensitive calcium channel activity. The auxiliary subunits beta and alpha-2/delta linked by a disulfide bridge regulate the channel activity. Interacts (via IQ domain) with CABP4; in a calcium independent manner. In terms of assembly, interacts with CABP4; suppresses robust calcium-dependent inactivation of channel without enhancing the hyperpolarized voltage-dependent activation. As to expression, expression in skeletal muscle and retina. Isoform 4 is expressed in retina.

The protein resides in the membrane. The enzyme catalyses Ca(2+)(in) = Ca(2+)(out). Functionally, voltage-sensitive calcium channels (VSCC) mediate the entry of calcium ions into excitable cells and are also involved in a variety of calcium-dependent processes, including muscle contraction, hormone or neurotransmitter release, gene expression, cell motility, cell division and cell death. The isoform alpha-1F gives rise to L-type calcium currents. Long-lasting (L-type) calcium channels belong to the 'high-voltage activated' (HVA) group. They are blocked by dihydropyridines (DHP), phenylalkylamines, and by benzothiazepines. Activates at more negative voltages and does not undergo calcium-dependent inactivation (CDI), due to incoming calcium ions, during depolarization. Voltage-dependent L-type calcium channel activates at more hyperpolarized voltages and exhibits a robust calcium-dependent inactivation (CDI), due to incoming calcium ions, during depolarizations. In terms of biological role, voltage-sensitive calcium channels (VSCC) mediate the entry of calcium ions into excitable cells and are also involved in a variety of calcium-dependent processes, including muscle contraction, hormone or neurotransmitter release, gene expression, cell motility, cell division and cell death. This is Voltage-dependent L-type calcium channel subunit alpha-1F from Homo sapiens (Human).